A 957-amino-acid polypeptide reads, in one-letter code: Vacuolar membrane protease (957 aa).

Residues Met1–Thr10 lie on the Cytoplasmic side of the membrane. A helical membrane pass occupies residues Pro11–Val31. Topologically, residues Thr32–Thr369 are vacuolar. N-linked (GlcNAc...) asparagine glycosylation is found at Asn48, Asn105, and Asn136. Residues His152 and Asp164 each contribute to the Zn(2+) site. Glu198 acts as the Proton acceptor in catalysis. Zn(2+)-binding residues include Glu199, Glu224, and His297. The helical transmembrane segment at Leu370–Phe390 threads the bilayer. Topologically, residues Gly391–Gly423 are cytoplasmic. The helical transmembrane segment at Phe424 to Leu444 threads the bilayer. Residues Leu445–Ala450 are Vacuolar-facing. Residues Phe451–Val471 form a helical membrane-spanning segment. Topologically, residues Ala472–Met490 are cytoplasmic. Residues Tyr491–Val511 form a helical membrane-spanning segment. The Vacuolar portion of the chain corresponds to Asn512–Pro521. A helical transmembrane segment spans residues Ala522–Phe542. The Cytoplasmic segment spans residues Ala543–Lys642. Disordered stretches follow at residues Ser559–Asp586 and Phe603–Leu627. The segment covering Phe603–Ala613 has biased composition (basic and acidic residues). Residues Leu643–Val663 traverse the membrane as a helical segment. Over Gly664–Leu685 the chain is Vacuolar. A helical transmembrane segment spans residues Phe686–Ile706. The Cytoplasmic portion of the chain corresponds to His707–Val713. The chain crosses the membrane as a helical span at residues Pro714–Phe734. Over Ser735–Ile957 the chain is Vacuolar. Residues Asn782, Asn818, and Asn834 are each glycosylated (N-linked (GlcNAc...) asparagine).

Belongs to the peptidase M28 family. Requires Zn(2+) as cofactor.

It localises to the vacuole membrane. In terms of biological role, may be involved in vacuolar sorting and osmoregulation. The sequence is that of Vacuolar membrane protease from Pyrenophora teres f. teres (strain 0-1) (Barley net blotch fungus).